The sequence spans 119 residues: Large ribosomal subunit protein bL20 (119 aa).

The protein belongs to the bacterial ribosomal protein bL20 family.

In terms of biological role, binds directly to 23S ribosomal RNA and is necessary for the in vitro assembly process of the 50S ribosomal subunit. It is not involved in the protein synthesizing functions of that subunit. This is Large ribosomal subunit protein bL20 from Verminephrobacter eiseniae (strain EF01-2).